A 449-amino-acid polypeptide reads, in one-letter code: Bifunctional protein GlmU (449 aa).

Residues 1–226 (MNNIHAIILA…KFEVLGVNDK (226 aa)) are pyrophosphorylase. UDP-N-acetyl-alpha-D-glucosamine-binding positions include 9–12 (LAAG), lysine 23, glutamine 73, 78–79 (GT), 100–102 (YGD), glycine 137, glutamate 151, asparagine 166, and asparagine 224. Aspartate 102 is a binding site for Mg(2+). Asparagine 224 is a binding site for Mg(2+). The interval 227 to 247 (VQLAELERLFQKDQAIQFMKQ) is linker. Residues 248-449 (GLGLKDPTRF…QKNLKYRSKK (202 aa)) are N-acetyltransferase. Residues arginine 330 and lysine 348 each coordinate UDP-N-acetyl-alpha-D-glucosamine. Residue histidine 360 is the Proton acceptor of the active site. UDP-N-acetyl-alpha-D-glucosamine-binding residues include tyrosine 363 and asparagine 374. Acetyl-CoA contacts are provided by residues alanine 377, 383–384 (NY), serine 402, alanine 420, and arginine 437.

In the N-terminal section; belongs to the N-acetylglucosamine-1-phosphate uridyltransferase family. It in the C-terminal section; belongs to the transferase hexapeptide repeat family. In terms of assembly, homotrimer. The cofactor is Mg(2+).

Its subcellular location is the cytoplasm. It carries out the reaction alpha-D-glucosamine 1-phosphate + acetyl-CoA = N-acetyl-alpha-D-glucosamine 1-phosphate + CoA + H(+). The catalysed reaction is N-acetyl-alpha-D-glucosamine 1-phosphate + UTP + H(+) = UDP-N-acetyl-alpha-D-glucosamine + diphosphate. The protein operates within nucleotide-sugar biosynthesis; UDP-N-acetyl-alpha-D-glucosamine biosynthesis; N-acetyl-alpha-D-glucosamine 1-phosphate from alpha-D-glucosamine 6-phosphate (route II): step 2/2. Its pathway is nucleotide-sugar biosynthesis; UDP-N-acetyl-alpha-D-glucosamine biosynthesis; UDP-N-acetyl-alpha-D-glucosamine from N-acetyl-alpha-D-glucosamine 1-phosphate: step 1/1. It participates in bacterial outer membrane biogenesis; LPS lipid A biosynthesis. In terms of biological role, catalyzes the last two sequential reactions in the de novo biosynthetic pathway for UDP-N-acetylglucosamine (UDP-GlcNAc). The C-terminal domain catalyzes the transfer of acetyl group from acetyl coenzyme A to glucosamine-1-phosphate (GlcN-1-P) to produce N-acetylglucosamine-1-phosphate (GlcNAc-1-P), which is converted into UDP-GlcNAc by the transfer of uridine 5-monophosphate (from uridine 5-triphosphate), a reaction catalyzed by the N-terminal domain. The polypeptide is Bifunctional protein GlmU (Vesicomyosocius okutanii subsp. Calyptogena okutanii (strain HA)).